The following is a 197-amino-acid chain: Rac-like GTP-binding protein RAC1 (197 aa).

Position 13-20 (G13–T20) interacts with GTP. The Effector region signature appears at Y35–F43. GTP is bound by residues D60 to Q64 and T118 to D121. Residue C194 is modified to Cysteine methyl ester. Residue C194 is the site of S-geranylgeranyl cysteine attachment. The propeptide at S195–L197 is removed in mature form.

This sequence belongs to the small GTPase superfamily. Rho family.

The protein resides in the cytoplasm. It localises to the membrane. In terms of biological role, inactive GDP-bound Rho GTPases reside in the cytosol, are found in a complex with Rho GDP-dissociation inhibitors (Rho GDIs), and are released from the GDI protein in order to translocate to membranes upon activation. The polypeptide is Rac-like GTP-binding protein RAC1 (RAC1) (Lotus japonicus (Lotus corniculatus var. japonicus)).